The chain runs to 473 residues: Serine/threonine-protein phosphatase T (473 aa).

TPR repeat units follow at residues 5-38 (ALEL…DSTN), 40-72 (ILYS…DPEY), and 73-106 (AKAY…APSD). Residues 159-472 (KQITKEFVED…MAYANGLLSG (314 aa)) are catalytic. Aspartate 217, histidine 219, aspartate 246, and asparagine 278 together coordinate Mn(2+). Histidine 279 serves as the catalytic Proton donor/acceptor. The Mn(2+) site is built by histidine 327 and histidine 404.

It belongs to the PPP phosphatase family. PP-5 (PP-T) subfamily. Requires Mg(2+) as cofactor. It depends on Mn(2+) as a cofactor.

Its subcellular location is the nucleus. The catalysed reaction is O-phospho-L-seryl-[protein] + H2O = L-seryl-[protein] + phosphate. It catalyses the reaction O-phospho-L-threonyl-[protein] + H2O = L-threonyl-[protein] + phosphate. Protein phosphatase that specifically binds to and dephosphorylates the molecular chaperone Hsp90. Dephosphorylation positively regulates the Hsp90 chaperone machinery. The polypeptide is Serine/threonine-protein phosphatase T (ppt1) (Schizosaccharomyces pombe (strain 972 / ATCC 24843) (Fission yeast)).